Here is a 659-residue protein sequence, read N- to C-terminus: RNA polymerase II subunit A C-terminal domain phosphatase (659 aa).

In terms of domain architecture, FCP1 homology spans 139–303 (ITNRKLVLLV…KNSKEQMPVQ (165 aa)). Residues 351 to 443 (ERHKVLDGCV…LKADENLFQL (93 aa)) form the BRCT domain. Residues 484 to 504 (ALSDDEDDGDNEDEDDDGNDV) show a composition bias toward acidic residues. The interval 484–640 (ALSDDEDDGD…PESDDDDEFE (157 aa)) is disordered. Residues 505–519 (GEDKGDENLEEKQEK) show a composition bias toward basic and acidic residues. A compositionally biased stretch (polar residues) spans 529-538 (QNGSVENQSG). 3 stretches are compositionally biased toward acidic residues: residues 560–576 (MEDE…DDDT), 596–607 (ENEDDAVFDVDD), and 616–640 (IDEE…DEFE).

The protein localises to the nucleus. The enzyme catalyses O-phospho-L-seryl-[protein] + H2O = L-seryl-[protein] + phosphate. It carries out the reaction O-phospho-L-threonyl-[protein] + H2O = L-threonyl-[protein] + phosphate. Functionally, during the late stages of oogenesis, dephosphorylates 'Ser-5' of the heptad repeats YSPTSPS in the C-terminal domain of the largest RNA polymerase II subunit ama-1. Similarly, dephosphorylates 'Ser-5' of ama-1 in early embryonic cells prior to the activation of the zygotic transcription program at the 4-cell embryonic stage. May dephosphorylate 'Ser-2' of the ama-1 heptad repeats YSPTSPS in embryonic somatic and germline cells. This is RNA polymerase II subunit A C-terminal domain phosphatase from Caenorhabditis elegans.